We begin with the raw amino-acid sequence, 201 residues long: Large ribosomal subunit protein uL4 (201 aa).

Residues 45–66 (AQLTRSEVSGGGKKPWRQKGTG) are disordered.

Belongs to the universal ribosomal protein uL4 family. As to quaternary structure, part of the 50S ribosomal subunit.

Its function is as follows. One of the primary rRNA binding proteins, this protein initially binds near the 5'-end of the 23S rRNA. It is important during the early stages of 50S assembly. It makes multiple contacts with different domains of the 23S rRNA in the assembled 50S subunit and ribosome. Functionally, forms part of the polypeptide exit tunnel. The protein is Large ribosomal subunit protein uL4 of Aeromonas hydrophila subsp. hydrophila (strain ATCC 7966 / DSM 30187 / BCRC 13018 / CCUG 14551 / JCM 1027 / KCTC 2358 / NCIMB 9240 / NCTC 8049).